Reading from the N-terminus, the 345-residue chain is NADH-quinone oxidoreductase subunit H (345 aa).

8 helical membrane passes run 9-29 (ALGA…LVFA), 82-102 (VVMV…EGVV), 108-128 (VGVI…TLAG), 154-174 (MGLA…MEIV), 183-203 (LLGW…VTAF), 241-261 (YVNW…GYLV), 282-302 (LLQF…FIWV), and 325-345 (IALA…AVGL).

It belongs to the complex I subunit 1 family. In terms of assembly, NDH-1 is composed of 14 different subunits. Subunits NuoA, H, J, K, L, M, N constitute the membrane sector of the complex.

It is found in the cell inner membrane. The catalysed reaction is a quinone + NADH + 5 H(+)(in) = a quinol + NAD(+) + 4 H(+)(out). In terms of biological role, NDH-1 shuttles electrons from NADH, via FMN and iron-sulfur (Fe-S) centers, to quinones in the respiratory chain. The immediate electron acceptor for the enzyme in this species is believed to be ubiquinone. Couples the redox reaction to proton translocation (for every two electrons transferred, four hydrogen ions are translocated across the cytoplasmic membrane), and thus conserves the redox energy in a proton gradient. This subunit may bind ubiquinone. This is NADH-quinone oxidoreductase subunit H from Salinibacter ruber (strain DSM 13855 / M31).